Consider the following 982-residue polypeptide: Protein lin-10 (982 aa).

Positions 1 to 16 (MSSEAVAQATAATTSP) are enriched in polar residues. 5 disordered regions span residues 1 to 55 (MSSE…MIPP), 119 to 228 (QPAL…RTDS), 269 to 327 (TVAD…STVP), 432 to 511 (FAQQ…GTDD), and 525 to 593 (QREQ…SKET). Over residues 33 to 44 (KGGGAGGGGGGE) the composition is skewed to gly residues. Positions 119–134 (QPALQQPRPSSQASSS) are enriched in low complexity. Polar residues-rich tracts occupy residues 143 to 156 (RQTA…NVSP) and 169 to 190 (ETSG…SSDV). Over residues 211-228 (GEEKSEEKRKLSGDRTDS) the composition is skewed to basic and acidic residues. Over residues 301–318 (SLNQLRSSFNLPDDSTTV) the composition is skewed to polar residues. Composition is skewed to low complexity over residues 432-445 (FAQQ…APTP) and 454-464 (PSTSSGPSGAL). Polar residues predominate over residues 490–501 (NGTSTSTTNGAQ). Positions 539–550 (QEAATAAQEAAE) are enriched in low complexity. Positions 577–593 (GAERRGSVDKKKNSKET) are enriched in basic and acidic residues. Positions 604 to 788 (GVLFRARYLG…VLNSQELLGD (185 aa)) constitute a PID domain. PDZ domains follow at residues 801-886 (EVVV…TVVS) and 892-968 (EVRI…MPTS).

As to quaternary structure, interacts (via N-terminus) with egl-9 isoform e (via catalytic domain); the interaction regulates its trafficking; the interaction is direct. Interacts with rab-6.2 (in GTP-bound form). Phosphorylated on multiple Ser and Thr residues by cdk-5 which regulates its localization. Post-translationally, may be hydroxylated by egl-9 isoform e on multiple Pro residues which may prevent phosphorylation by cdk-5. As to expression, expressed in vulval epithelial cells and neurons.

It localises to the golgi apparatus. Its subcellular location is the golgi stack membrane. The protein localises to the trans-Golgi network membrane. The protein resides in the cytoplasm. It is found in the synapse. It localises to the perikaryon. Its function is as follows. Required specifically for the determination of 3 vulval precursor cell fates P5.p, P6.p and P7.p during late second and early third larval stages; required for basolateral localization of receptor tyrosine kinase let-23. Could have a general but redundant role in development, functioning in diverse cell lineages to control cell fates. Regulates the trafficking of the glr-1 subunit of AMPA-type glutamate receptors (AMPRs) in the ventral nerve cord. This may be partly through interacting with the small GTPase rab-6.2 in its active GTP-bound state. The protein is Protein lin-10 of Caenorhabditis elegans.